The chain runs to 658 residues: Endoplasmic reticulum chaperone BiP (658 aa).

The N-terminal stretch at 1–19 (MVTMKLFALVLLVSASVFA) is a signal peptide. ATP-binding positions include 38–41 (GTTY), lysine 98, 228–230 (GGT), 294–301 (EKAKRALS), and 365–368 (GSTR). Residues 127 to 281 (KPYIEVDIGD…KKKTGKDVRA (155 aa)) form a nucleotide-binding (NBD) region. The tract at residues 410–420 (QDTGDLVLLDV) is interdomain linker. A substrate-binding (SBD) region spans residues 421-501 (CPLTLGIETV…PRGVPQIEVT (81 aa)). The disordered stretch occupies residues 634–658 (KLYGGAGAPPPEGAEGAEETEKDEL). The span at 648–658 (EGAEETEKDEL) shows a compositional bias: acidic residues. Residues 655–658 (KDEL) carry the Prevents secretion from ER motif.

It belongs to the heat shock protein 70 family. Monomer and homooligomer; homooligomerization via the interdomain linker inactivates the chaperone activity and acts as a storage of hspa5/BiP molecules. Interacts with DNAJC10. Interacts with dnajb9/ERdj4; leading to recruit hspa5/BiP to ern1/ire1. Interacts with ern1/ire1; interaction takes place following interaction with dnajb9/ERdj4 and leads to inactivate ern1/IRE1.

The protein resides in the endoplasmic reticulum lumen. The enzyme catalyses ATP + H2O = ADP + phosphate + H(+). Its activity is regulated as follows. The chaperone activity is regulated by ATP-induced allosteric coupling of the nucleotide-binding (NBD) and substrate-binding (SBD) domains. In the ADP-bound and nucleotide-free (apo) states, the two domains have little interaction. In contrast, in the ATP-bound state the two domains are tightly coupled, which results in drastically accelerated kinetics in both binding and release of polypeptide substrates. J domain-containing co-chaperones (dnajb9/ERdj4 or dnajc10/ERdj5) stimulate the ATPase activity and are required for efficient substrate recognition by hspa5/BiP. Homooligomerization inactivates participating hspa5/BiP protomers and probably act as reservoirs to store hspa5/BiP molecules when they are not needed by the cell. Endoplasmic reticulum chaperone that plays a key role in protein folding and quality control in the endoplasmic reticulum lumen. Involved in the correct folding of proteins and degradation of misfolded proteins via its interaction with dnajc10/ERdj5, probably to facilitate the release of dnajc10/ERdj5 from its substrate. Acts as a key repressor of the EIF2AK3/PERK and ERN1/IRE1-mediated unfolded protein response (UPR). In the unstressed endoplasmic reticulum, recruited by DNAJB9/ERdj4 to the luminal region of ERN1/IRE1, leading to disrupt the dimerization of ERN1/IRE1, thereby inactivating ERN1/IRE1. Also binds and inactivates EIF2AK3/PERK in unstressed cells. Accumulation of misfolded protein in the endoplasmic reticulum causes release of HSPA5/BiP from ERN1/IRE1 and EIF2AK3/PERK, allowing their homodimerization and subsequent activation. This chain is Endoplasmic reticulum chaperone BiP, found in Xenopus laevis (African clawed frog).